The primary structure comprises 394 residues: NAD(P)H-quinone oxidoreductase subunit H (394 aa).

The protein belongs to the complex I 49 kDa subunit family. In terms of assembly, NDH-1 can be composed of about 15 different subunits; different subcomplexes with different compositions have been identified which probably have different functions.

It localises to the cellular thylakoid membrane. It catalyses the reaction a plastoquinone + NADH + (n+1) H(+)(in) = a plastoquinol + NAD(+) + n H(+)(out). It carries out the reaction a plastoquinone + NADPH + (n+1) H(+)(in) = a plastoquinol + NADP(+) + n H(+)(out). NDH-1 shuttles electrons from an unknown electron donor, via FMN and iron-sulfur (Fe-S) centers, to quinones in the respiratory and/or the photosynthetic chain. The immediate electron acceptor for the enzyme in this species is believed to be plastoquinone. Couples the redox reaction to proton translocation, and thus conserves the redox energy in a proton gradient. Cyanobacterial NDH-1 also plays a role in inorganic carbon-concentration. The chain is NAD(P)H-quinone oxidoreductase subunit H from Prochlorococcus marinus (strain NATL2A).